The chain runs to 48 residues: uncharacterized protein (48 aa).

A helical transmembrane segment spans residues 20–37 (ILASPLFFANYVLHAAIH).

It localises to the membrane. This is an uncharacterized protein from Saccharomyces cerevisiae (strain ATCC 204508 / S288c) (Baker's yeast).